Here is a 299-residue protein sequence, read N- to C-terminus: Putative peptidyl-prolyl cis-trans isomerase jhp_0161 (299 aa).

A signal peptide spans 1-21 (MKKNILNLALVGALSASFLMA). The PpiC domain maps to 154–253 (KQEAHARHIL…FGYHIIYLIS (100 aa)).

It carries out the reaction [protein]-peptidylproline (omega=180) = [protein]-peptidylproline (omega=0). The sequence is that of Putative peptidyl-prolyl cis-trans isomerase jhp_0161 from Helicobacter pylori (strain J99 / ATCC 700824) (Campylobacter pylori J99).